The primary structure comprises 314 residues: Methionyl-tRNA formyltransferase (314 aa).

111-114 (SLLP) serves as a coordination point for (6S)-5,6,7,8-tetrahydrofolate.

This sequence belongs to the Fmt family.

It catalyses the reaction L-methionyl-tRNA(fMet) + (6R)-10-formyltetrahydrofolate = N-formyl-L-methionyl-tRNA(fMet) + (6S)-5,6,7,8-tetrahydrofolate + H(+). Functionally, attaches a formyl group to the free amino group of methionyl-tRNA(fMet). The formyl group appears to play a dual role in the initiator identity of N-formylmethionyl-tRNA by promoting its recognition by IF2 and preventing the misappropriation of this tRNA by the elongation apparatus. The polypeptide is Methionyl-tRNA formyltransferase (Chlorobium chlorochromatii (strain CaD3)).